Here is a 589-residue protein sequence, read N- to C-terminus: Kelch-like protein 25 (589 aa).

The BTB domain occupies 46–114 (TDVTLWAGNR…AYSSKIIINE (69 aa)). Residues 149-250 (CLGMMILSDA…LPSELLKEAV (102 aa)) enclose the BACK domain. Kelch repeat units lie at residues 296 to 340 (TLLI…AIGC), 341 to 388 (KVYV…ELEN), 389 to 444 (CLYV…SAKL), 446 to 492 (LFAF…VLGS), 493 to 538 (QIFI…ASGN), and 539 to 585 (KVYV…STWK).

In terms of assembly, component of the BCR(KLHL25) E3 ubiquitin ligase complex, at least composed of cul3, klhl25 and rbx1.

Its pathway is protein modification; protein ubiquitination. Substrate-specific adapter of a BCR (BTB-CUL3-RBX1) E3 ubiquitin ligase complex involved in various processes, such as translation homeostasis and lipid synthesis. The BCR(KLHL25) ubiquitin ligase complex acts by mediating ubiquitination of hypophosphorylated eif4ebp1 (4E-BP1): ubiquitination and subsequent degradation of hypophosphorylated EIF4EBP1 (4E-BP1) probably serves as a homeostatic mechanism to maintain translation and prevent eIF4E inhibition when eIF4E levels are low. The BCR(KLHL25) complex also acts as a regulator of lipid synthesis by mediating ubiquitination and degradation of ACLY, thereby inhibiting lipid synthesis. This Xenopus tropicalis (Western clawed frog) protein is Kelch-like protein 25.